Reading from the N-terminus, the 605-residue chain is Elongation factor 4 (605 aa).

The tr-type G domain maps to 11–193; sequence KCIRNFSIIA…QIVTRISPPQ (183 aa). GTP contacts are provided by residues 23 to 28 and 140 to 143; these read DHGKST and NKVD.

Belongs to the TRAFAC class translation factor GTPase superfamily. Classic translation factor GTPase family. LepA subfamily.

It localises to the cell membrane. It catalyses the reaction GTP + H2O = GDP + phosphate + H(+). Required for accurate and efficient protein synthesis under certain stress conditions. May act as a fidelity factor of the translation reaction, by catalyzing a one-codon backward translocation of tRNAs on improperly translocated ribosomes. Back-translocation proceeds from a post-translocation (POST) complex to a pre-translocation (PRE) complex, thus giving elongation factor G a second chance to translocate the tRNAs correctly. Binds to ribosomes in a GTP-dependent manner. This is Elongation factor 4 from Aster yellows witches'-broom phytoplasma (strain AYWB).